The primary structure comprises 284 residues: tRNA-cytidine(32) 2-sulfurtransferase (284 aa).

A PP-loop motif motif is present at residues 45-50 (SGGKDS). Residues Cys120, Cys123, and Cys211 each contribute to the [4Fe-4S] cluster site.

It belongs to the TtcA family. Homodimer. It depends on Mg(2+) as a cofactor. Requires [4Fe-4S] cluster as cofactor.

The protein resides in the cytoplasm. The enzyme catalyses cytidine(32) in tRNA + S-sulfanyl-L-cysteinyl-[cysteine desulfurase] + AH2 + ATP = 2-thiocytidine(32) in tRNA + L-cysteinyl-[cysteine desulfurase] + A + AMP + diphosphate + H(+). Its pathway is tRNA modification. In terms of biological role, catalyzes the ATP-dependent 2-thiolation of cytidine in position 32 of tRNA, to form 2-thiocytidine (s(2)C32). The sulfur atoms are provided by the cysteine/cysteine desulfurase (IscS) system. The sequence is that of tRNA-cytidine(32) 2-sulfurtransferase from Alcanivorax borkumensis (strain ATCC 700651 / DSM 11573 / NCIMB 13689 / SK2).